The following is a 314-amino-acid chain: NADH-ubiquinone oxidoreductase chain 1 (314 aa).

Transmembrane regions (helical) follow at residues 5–25, 78–98, 105–125, 151–171, 176–196, 227–247, 251–271, and 294–314; these read IMPL…VAFL, FSPI…PYLI, LGVL…MIAG, LALI…LNFY, YIWF…SCLA, LIFL…VVIF, DIYS…FIWV, and LSLN…SLLF.

This sequence belongs to the complex I subunit 1 family.

Its subcellular location is the mitochondrion inner membrane. It carries out the reaction a ubiquinone + NADH + 5 H(+)(in) = a ubiquinol + NAD(+) + 4 H(+)(out). In terms of biological role, core subunit of the mitochondrial membrane respiratory chain NADH dehydrogenase (Complex I) that is believed to belong to the minimal assembly required for catalysis. Complex I functions in the transfer of electrons from NADH to the respiratory chain. The immediate electron acceptor for the enzyme is believed to be ubiquinone. This chain is NADH-ubiquinone oxidoreductase chain 1 (ND1), found in Anopheles quadrimaculatus (Common malaria mosquito).